We begin with the raw amino-acid sequence, 336 residues long: tRNA pseudouridine synthase D (336 aa).

The active-site Nucleophile is the D84. Residues 164 to 298 (GVPNYFGEQR…TPSYRWLVGD (135 aa)) form the TRUD domain.

The protein belongs to the pseudouridine synthase TruD family.

It catalyses the reaction uridine(13) in tRNA = pseudouridine(13) in tRNA. Functionally, responsible for synthesis of pseudouridine from uracil-13 in transfer RNAs. This Cellvibrio japonicus (strain Ueda107) (Pseudomonas fluorescens subsp. cellulosa) protein is tRNA pseudouridine synthase D.